Here is a 500-residue protein sequence, read N- to C-terminus: Probable cytosol aminopeptidase (500 aa).

Lys269 and Asp274 together coordinate Mn(2+). Lys281 is an active-site residue. Mn(2+) is bound by residues Asp292, Asp351, and Glu353. Residue Arg355 is part of the active site.

The protein belongs to the peptidase M17 family. The cofactor is Mn(2+).

The protein resides in the cytoplasm. The catalysed reaction is Release of an N-terminal amino acid, Xaa-|-Yaa-, in which Xaa is preferably Leu, but may be other amino acids including Pro although not Arg or Lys, and Yaa may be Pro. Amino acid amides and methyl esters are also readily hydrolyzed, but rates on arylamides are exceedingly low.. The enzyme catalyses Release of an N-terminal amino acid, preferentially leucine, but not glutamic or aspartic acids.. Functionally, presumably involved in the processing and regular turnover of intracellular proteins. Catalyzes the removal of unsubstituted N-terminal amino acids from various peptides. This Acidithiobacillus ferrooxidans (strain ATCC 23270 / DSM 14882 / CIP 104768 / NCIMB 8455) (Ferrobacillus ferrooxidans (strain ATCC 23270)) protein is Probable cytosol aminopeptidase.